A 435-amino-acid chain; its full sequence is Serine--tRNA ligase (435 aa).

233 to 235 (TAE) provides a ligand contact to L-serine. 264–266 (RAE) serves as a coordination point for ATP. L-serine is bound at residue Glu-287. Residue 351-354 (EISS) coordinates ATP. Ser-386 is a binding site for L-serine.

This sequence belongs to the class-II aminoacyl-tRNA synthetase family. Type-1 seryl-tRNA synthetase subfamily. In terms of assembly, homodimer. The tRNA molecule binds across the dimer.

The protein localises to the cytoplasm. The enzyme catalyses tRNA(Ser) + L-serine + ATP = L-seryl-tRNA(Ser) + AMP + diphosphate + H(+). It catalyses the reaction tRNA(Sec) + L-serine + ATP = L-seryl-tRNA(Sec) + AMP + diphosphate + H(+). Its pathway is aminoacyl-tRNA biosynthesis; selenocysteinyl-tRNA(Sec) biosynthesis; L-seryl-tRNA(Sec) from L-serine and tRNA(Sec): step 1/1. Its function is as follows. Catalyzes the attachment of serine to tRNA(Ser). Is also able to aminoacylate tRNA(Sec) with serine, to form the misacylated tRNA L-seryl-tRNA(Sec), which will be further converted into selenocysteinyl-tRNA(Sec). In Anaeromyxobacter sp. (strain K), this protein is Serine--tRNA ligase.